The primary structure comprises 335 residues: Methionine import ATP-binding protein MetN 2 (335 aa).

Residues 2-242 (IEFHDVHKTY…PQHPTTRRFV (241 aa)) form the ABC transporter domain. 38 to 45 (GHSGAGKS) serves as a coordination point for ATP.

The protein belongs to the ABC transporter superfamily. Methionine importer (TC 3.A.1.24) family. The complex is composed of two ATP-binding proteins (MetN), two transmembrane proteins (MetI) and a solute-binding protein (MetQ).

It is found in the cell inner membrane. The catalysed reaction is L-methionine(out) + ATP + H2O = L-methionine(in) + ADP + phosphate + H(+). The enzyme catalyses D-methionine(out) + ATP + H2O = D-methionine(in) + ADP + phosphate + H(+). In terms of biological role, part of the ABC transporter complex MetNIQ involved in methionine import. Responsible for energy coupling to the transport system. This chain is Methionine import ATP-binding protein MetN 2, found in Pseudomonas aeruginosa (strain UCBPP-PA14).